A 550-amino-acid chain; its full sequence is Selinene synthase (550 aa).

Mg(2+) contacts are provided by Asp314, Asp318, Asp450, and Glu458. The DDXXD motif motif lies at Asp314–Asp318.

The protein belongs to the terpene synthase family. It depends on Mg(2+) as a cofactor. Mn(2+) is required as a cofactor.

The enzyme catalyses (2E,6E)-farnesyl diphosphate = (+)-beta-selinene + diphosphate. The catalysed reaction is (2E,6E)-farnesyl diphosphate = alpha-selinene + diphosphate. The protein operates within secondary metabolite biosynthesis; terpenoid biosynthesis. Its function is as follows. Sesquiterpene synthase that catalyzes the formation of alpha- and beta-selinene from trans,trans-farnesyl diphosphate (FPP). Also produces some nerolidol. The protein is Selinene synthase (SES) of Ocimum basilicum (Sweet basil).